Reading from the N-terminus, the 369-residue chain is Flagellar P-ring protein (369 aa).

The signal sequence occupies residues 1 to 22 (MIKLKQLIAATLLLSTAFGVHA).

This sequence belongs to the FlgI family. In terms of assembly, the basal body constitutes a major portion of the flagellar organelle and consists of four rings (L,P,S, and M) mounted on a central rod.

It is found in the periplasm. The protein resides in the bacterial flagellum basal body. In terms of biological role, assembles around the rod to form the L-ring and probably protects the motor/basal body from shearing forces during rotation. This is Flagellar P-ring protein from Pseudomonas savastanoi pv. phaseolicola (strain 1448A / Race 6) (Pseudomonas syringae pv. phaseolicola (strain 1448A / Race 6)).